Reading from the N-terminus, the 254-residue chain is Coenzyme F420:L-glutamate ligase (254 aa).

Residues 11–14, 40–41, and lysine 45 each bind GTP; these read IPLI and ST. Position 109 (aspartate 109) interacts with a divalent metal cation. Asparagine 112 serves as a coordination point for GTP. The a divalent metal cation site is built by aspartate 150, threonine 151, and glutamate 208. 206 to 213 is a GTP binding site; it reads MGEGAGGI.

The protein belongs to the CofE family. As to quaternary structure, homodimer. Mg(2+) serves as cofactor. The cofactor is Mn(2+). Requires K(+) as cofactor.

It catalyses the reaction oxidized coenzyme F420-0 + GTP + L-glutamate = oxidized coenzyme F420-1 + GDP + phosphate + H(+). The catalysed reaction is oxidized coenzyme F420-1 + GTP + L-glutamate = oxidized coenzyme F420-2 + GDP + phosphate + H(+). The protein operates within cofactor biosynthesis; coenzyme F420 biosynthesis. Its function is as follows. Catalyzes the GTP-dependent successive addition of two or more gamma-linked L-glutamates to the L-lactyl phosphodiester of 7,8-didemethyl-8-hydroxy-5-deazariboflavin (F420-0) to form coenzyme F420-0-glutamyl-glutamate (F420-2) or polyglutamated F420 derivatives. The protein is Coenzyme F420:L-glutamate ligase of Methanosarcina mazei (strain ATCC BAA-159 / DSM 3647 / Goe1 / Go1 / JCM 11833 / OCM 88) (Methanosarcina frisia).